The following is a 315-amino-acid chain: Ribose-phosphate pyrophosphokinase (315 aa).

ATP-binding positions include aspartate 37 to glutamate 39 and arginine 96 to glutamine 97. 2 residues coordinate Mg(2+): histidine 131 and aspartate 170. Lysine 194 is a catalytic residue. Residues arginine 196, aspartate 220, and aspartate 224–threonine 228 contribute to the D-ribose 5-phosphate site.

The protein belongs to the ribose-phosphate pyrophosphokinase family. Class I subfamily. In terms of assembly, homohexamer. Mg(2+) serves as cofactor.

It localises to the cytoplasm. The enzyme catalyses D-ribose 5-phosphate + ATP = 5-phospho-alpha-D-ribose 1-diphosphate + AMP + H(+). It functions in the pathway metabolic intermediate biosynthesis; 5-phospho-alpha-D-ribose 1-diphosphate biosynthesis; 5-phospho-alpha-D-ribose 1-diphosphate from D-ribose 5-phosphate (route I): step 1/1. Its function is as follows. Involved in the biosynthesis of the central metabolite phospho-alpha-D-ribosyl-1-pyrophosphate (PRPP) via the transfer of pyrophosphoryl group from ATP to 1-hydroxyl of ribose-5-phosphate (Rib-5-P). The protein is Ribose-phosphate pyrophosphokinase of Buchnera aphidicola subsp. Schizaphis graminum (strain Sg).